Consider the following 504-residue polypeptide: ATP synthase subunit alpha (504 aa).

Residue 169–176 (GDRQTGKT) coordinates ATP.

Belongs to the ATPase alpha/beta chains family. F-type ATPases have 2 components, CF(1) - the catalytic core - and CF(0) - the membrane proton channel. CF(1) has five subunits: alpha(3), beta(3), gamma(1), delta(1), epsilon(1). CF(0) has three main subunits: a(1), b(2) and c(9-12). The alpha and beta chains form an alternating ring which encloses part of the gamma chain. CF(1) is attached to CF(0) by a central stalk formed by the gamma and epsilon chains, while a peripheral stalk is formed by the delta and b chains.

It is found in the cell membrane. It catalyses the reaction ATP + H2O + 4 H(+)(in) = ADP + phosphate + 5 H(+)(out). Its function is as follows. Produces ATP from ADP in the presence of a proton gradient across the membrane. The alpha chain is a regulatory subunit. This Clostridium botulinum (strain ATCC 19397 / Type A) protein is ATP synthase subunit alpha.